A 150-amino-acid polypeptide reads, in one-letter code: Large ribosomal subunit protein bL9 (150 aa).

Belongs to the bacterial ribosomal protein bL9 family.

Binds to the 23S rRNA. This chain is Large ribosomal subunit protein bL9, found in Erwinia tasmaniensis (strain DSM 17950 / CFBP 7177 / CIP 109463 / NCPPB 4357 / Et1/99).